We begin with the raw amino-acid sequence, 90 residues long: Barrier-to-autointegration factor A (90 aa).

The protein belongs to the BAF family. As to quaternary structure, homodimer. Interacts with nemp1a and nemp1b. Phosphorylated during S and M phases.

The protein resides in the nucleus. Its subcellular location is the chromosome. It is found in the nucleus envelope. The protein localises to the cytoplasm. Non-specific DNA-binding protein that plays key roles in mitotic nuclear reassembly, chromatin organization, DNA damage response, gene expression and intrinsic immunity against foreign DNA. Contains two non-specific double-stranded DNA (dsDNA)-binding sites which promote DNA cross-bridging. Plays a key role in nuclear membrane reformation at the end of mitosis by driving formation of a single nucleus in a spindle-independent manner. Transiently cross-bridges anaphase chromosomes via its ability to bridge distant DNA sites, leading to the formation of a dense chromatin network at the chromosome ensemble surface that limits membranes to the surface. Also acts as a negative regulator of innate immune activation by restricting CGAS activity toward self-DNA upon acute loss of nuclear membrane integrity. Outcompetes CGAS for DNA-binding, thereby preventing CGAS activation and subsequent damaging autoinflammatory responses. Also involved in DNA damage response; acts by inhibiting the ADP-ribosyltransferase activity of PARP1. Involved in the recognition of exogenous dsDNA in the cytosol: associates with exogenous dsDNA immediately after its appearance in the cytosol at endosome breakdown and is required to avoid autophagy. This chain is Barrier-to-autointegration factor A (banf1-a), found in Xenopus laevis (African clawed frog).